A 1249-amino-acid polypeptide reads, in one-letter code: Voltage-dependent calcium channel unc-36 (1249 aa).

The signal sequence occupies residues 1-19 (MRVVHLLVVLATYVSTTSS). The Extracellular portion of the chain corresponds to 20–1228 (FNKESIKECA…SENERRPCST (1209 aa)). Residues Asn100, Asn140, Asn146, Asn302, Asn520, Asn558, Asn757, Asn838, Asn903, Asn923, and Asn1130 are each glycosylated (N-linked (GlcNAc...) asparagine). Residues 250–479 (NVLIMLDMSG…EKIHHYIRRM (230 aa)) enclose the VWFA domain. The helical transmembrane segment at 1229–1248 (SPTIVSIFQILFGVFLHFCI) threads the bilayer. Phe1249 is a topological domain (cytoplasmic).

As to expression, decendants of the cells AB and AB.p (that give rise to nearly all non-pharyngeal neurons), decendants of P1 (that give rise to body muscle) and cell lineages that give rise to the adult and juvenile motor neurons. Expressed in body wall, vulval muscle and pharyngeal muscle.

The protein resides in the membrane. May act as an auxiliary subunit of the unc-2 voltage-gated calcium channel which appears to trigger calcium-activated signaling pathways that control the serotonin response. Inhibiting serotonin sensitivity of the vulval muscles results in egg laying defects. May act in both neurons and muscle cells to enhance motor activity as it is required for coordinated movement. Has a role in neural depolarization-induced calcium influx and pharyngeal pumping. Involved in restricting the expression of the putative olfactory receptor str-2 to only one of the two AWC neurons. In Caenorhabditis elegans, this protein is Voltage-dependent calcium channel unc-36 (unc-36).